The sequence spans 361 residues: 3-dehydroquinate synthase (361 aa).

NAD(+) is bound by residues 60-65 (DAEAAK), 94-98 (GATTD), 118-119 (TT), Lys-131, and Lys-140. Residues Glu-173, His-242, and His-258 each contribute to the Zn(2+) site.

This sequence belongs to the sugar phosphate cyclases superfamily. Dehydroquinate synthase family. The cofactor is Co(2+). Zn(2+) is required as a cofactor. It depends on NAD(+) as a cofactor.

Its subcellular location is the cytoplasm. The enzyme catalyses 7-phospho-2-dehydro-3-deoxy-D-arabino-heptonate = 3-dehydroquinate + phosphate. It functions in the pathway metabolic intermediate biosynthesis; chorismate biosynthesis; chorismate from D-erythrose 4-phosphate and phosphoenolpyruvate: step 2/7. In terms of biological role, catalyzes the conversion of 3-deoxy-D-arabino-heptulosonate 7-phosphate (DAHP) to dehydroquinate (DHQ). The protein is 3-dehydroquinate synthase of Cutibacterium acnes (strain DSM 16379 / KPA171202) (Propionibacterium acnes).